Consider the following 1442-residue polypeptide: Cleavage and polyadenylation specificity factor subunit 1 (1442 aa).

The protein belongs to the CPSF1 family. In terms of assembly, component of the CPSF complex, at least composed of CPSF160, CPSF100, CPSF73-I, CPSF73-II, CPSF30, FY and FIPS5. Forms a complex with cleavage and polyadenylation specificity factor (CPSF) subunits FY, CPSF30, CPSF73-I, CPSF 73-II and CPSF100.

It is found in the nucleus. In terms of biological role, CPSF plays a key role in pre-mRNA 3'-end formation, recognizing the AAUAAA signal sequence and interacting with poly(A)polymerase and other factors to bring about cleavage and poly(A) addition. This subunit is involved in the RNA recognition step of the polyadenylation reaction. The sequence is that of Cleavage and polyadenylation specificity factor subunit 1 (CPSF160) from Arabidopsis thaliana (Mouse-ear cress).